Here is a 540-residue protein sequence, read N- to C-terminus: Membrane protein insertase YidC (540 aa).

5 helical membrane-spanning segments follow: residues 7-27 (LLVL…QMDY), 345-365 (IVSN…GILY), 415-435 (LGGC…YWTF), 453-473 (LSAQ…MFLL), and 494-514 (PLIF…YWLV).

This sequence belongs to the OXA1/ALB3/YidC family. Type 1 subfamily. Interacts with the Sec translocase complex via SecD. Specifically interacts with transmembrane segments of nascent integral membrane proteins during membrane integration.

It is found in the cell inner membrane. In terms of biological role, required for the insertion and/or proper folding and/or complex formation of integral membrane proteins into the membrane. Involved in integration of membrane proteins that insert both dependently and independently of the Sec translocase complex, as well as at least some lipoproteins. Aids folding of multispanning membrane proteins. The sequence is that of Membrane protein insertase YidC from Mannheimia succiniciproducens (strain KCTC 0769BP / MBEL55E).